The chain runs to 513 residues: Pleiotropic regulator 1 (513 aa).

Met1 is modified (N-acetylmethionine). 2 positions are modified to phosphoserine: Ser119 and Ser200. WD repeat units lie at residues 201–240 (GHLGWVRCIAVEPGNQWFVTGSADRTIKIWDLASGKLKLS), 243–282 (GHISTVRGVIVSTRSPYLFSCGEDKQVKCWDLEYNKVIRH), 285–324 (GHLSAVYGLDLHPTIDVLVTCSRDSTARIWDVRTKASVHT), 327–366 (GHTNAVATVRCQAAEPQIITGSHDTTIRLWDLVAGKTRVT), 369–409 (NHKK…QNLS), 410–448 (GHNAIINTLTVNSDGVLVSGADNGTMHLWDWRTGYNFQR), and 459–498 (DSESGIFACAFDQSESRLLTAEADKTIKVYKEDDTATEET). Ser390 carries the phosphoserine modification.

The protein belongs to the WD repeat PRL1/PRL2 family. As to quaternary structure, identified in the spliceosome C complex. Component of the PRP19-CDC5L splicing complex composed of a core complex comprising a homotetramer of PRPF19, CDC5L, PLRG1 and BCAS2, and at least three less stably associated proteins CTNNBL1, CWC15 and HSPA8. Interacts (via its WD40 repeat domain) directly with CDC5L (via its C-terminal); the interaction is required for mRNA splicing but not for spliceosome assembly. Component of the minor spliceosome, which splices U12-type introns. Within this complex, interacts with CRIPT. Also interacts directly in the complex with BCAS2 and PRPF19. Interacts with USB1.

It localises to the nucleus. The protein localises to the nucleus speckle. In terms of biological role, involved in pre-mRNA splicing as component of the spliceosome. Component of the PRP19-CDC5L complex that forms an integral part of the spliceosome and is required for activating pre-mRNA splicing. As a component of the minor spliceosome, involved in the splicing of U12-type introns in pre-mRNAs. The protein is Pleiotropic regulator 1 (PLRG1) of Bos taurus (Bovine).